Consider the following 35-residue polypeptide: Fatty acid synthase (35 aa).

Residue Ser12 is part of the active site.

In terms of assembly, homodimer which is arranged in a head to tail fashion. Interacts with CEACAM1; this interaction is insulin and phosphorylation-dependent; reduces fatty-acid synthase activity.

It is found in the cytoplasm. The protein localises to the melanosome. The catalysed reaction is acetyl-CoA + n malonyl-CoA + 2n NADPH + 2n H(+) = a long-chain fatty acid + (n+1) CoA + n CO2 + 2n NADP(+).. In terms of biological role, fatty acid synthetase catalyzes the formation of long-chain fatty acids from acetyl-CoA, malonyl-CoA and NADPH. This multifunctional protein has 7 catalytic activities as an acyl carrier protein. Its function is as follows. This fragment is from the acyltransferase domain of the fatty acid synthetase. The chain is Fatty acid synthase (FASN) from Capra hircus (Goat).